A 906-amino-acid chain; its full sequence is Formin-like protein 18 (906 aa).

Positions 1-25 are cleaved as a signal peptide; that stretch reads MSKLRWLIMAFLVCLLLLTPKDLEG. The helical transmembrane segment at 120–140 threads the bilayer; the sequence is MVVVGLSAACVALVTLVGICF. Disordered stretches follow at residues 267 to 416 and 854 to 906; these read AGGG…QADP and NAKA…DSDD. The span at 274-292 shows a compositional bias: pro residues; the sequence is AAPPPPAGPPPPAPPPLPP. The segment covering 293 to 303 has biased composition (basic residues); sequence SHHHHHGHHPP. Pro residues-rich tracts occupy residues 320–339, 348–375, and 383–402; these read APPPPPAHPAAPAPPPPAPS, GPPPPPPPAAPAAPRPPGPGPGPPPPPG, and GPPPPALPGGPRARGPPPFK. Low complexity-rich tracts occupy residues 403–416 and 854–877; these read KSPGAAAAAAQADP and NAKAKKQQQPTPAPRSRQSSQSSF. The FH2 domain maps to 411–866; the sequence is AAQADPNKAK…AKKQQQPTPA (456 aa). Positions 878 to 889 are enriched in basic and acidic residues; that stretch reads RDPRQQIQDRRA. The segment covering 897–906 has biased composition (low complexity); it reads SSSSSSDSDD.

It belongs to the formin-like family. Class-I subfamily.

It localises to the membrane. The chain is Formin-like protein 18 (FH18) from Oryza sativa subsp. japonica (Rice).